The sequence spans 538 residues: 2-isopropylmalate synthase (538 aa).

The Pyruvate carboxyltransferase domain occupies 6–277; it reads LIIFDTTLRD…DSTVPLSTID (272 aa). Residues Asp-15, His-206, His-208, and Asn-242 each coordinate Mn(2+). The regulatory domain stretch occupies residues 406 to 538; it reads RLEQVQVSCG…AHPDAAAQKL (133 aa).

Belongs to the alpha-IPM synthase/homocitrate synthase family. LeuA type 1 subfamily. As to quaternary structure, homodimer. The cofactor is Mn(2+).

It is found in the cytoplasm. It catalyses the reaction 3-methyl-2-oxobutanoate + acetyl-CoA + H2O = (2S)-2-isopropylmalate + CoA + H(+). The protein operates within amino-acid biosynthesis; L-leucine biosynthesis; L-leucine from 3-methyl-2-oxobutanoate: step 1/4. Functionally, catalyzes the condensation of the acetyl group of acetyl-CoA with 3-methyl-2-oxobutanoate (2-ketoisovalerate) to form 3-carboxy-3-hydroxy-4-methylpentanoate (2-isopropylmalate). This Gloeobacter violaceus (strain ATCC 29082 / PCC 7421) protein is 2-isopropylmalate synthase.